The primary structure comprises 589 residues: Isocitrate dehydrogenase kinase/phosphatase (589 aa).

ATP is bound by residues 317–323 (AAGIKGM) and Lys338. Asp373 is a catalytic residue.

This sequence belongs to the AceK family.

It localises to the cytoplasm. The catalysed reaction is L-seryl-[isocitrate dehydrogenase] + ATP = O-phospho-L-seryl-[isocitrate dehydrogenase] + ADP + H(+). Functionally, bifunctional enzyme which can phosphorylate or dephosphorylate isocitrate dehydrogenase (IDH) on a specific serine residue. This is a regulatory mechanism which enables bacteria to bypass the Krebs cycle via the glyoxylate shunt in response to the source of carbon. When bacteria are grown on glucose, IDH is fully active and unphosphorylated, but when grown on acetate or ethanol, the activity of IDH declines drastically concomitant with its phosphorylation. The chain is Isocitrate dehydrogenase kinase/phosphatase from Colwellia psychrerythraea (strain 34H / ATCC BAA-681) (Vibrio psychroerythus).